A 745-amino-acid polypeptide reads, in one-letter code: DEAD-box ATP-dependent RNA helicase 3A, chloroplastic (745 aa).

A chloroplast-targeting transit peptide spans 1–41 (MASLVTLPAIAFSNPATASGAVRLRAAAFRCWALRRRGWAV). Positions 88–116 (LAIARLGLPDELVATLEKRGITHLFPIQR) match the Q motif motif. Residues 119–295 (LIPALGGRDL…RRYLNNPLTI (177 aa)) form the Helicase ATP-binding domain. 132 to 139 (AKTGTGKT) is a binding site for ATP. The DEAD box motif lies at 243–246 (DEAD). The 146-residue stretch at 324-469 (ILSDLITVYA…ISPPSIEEVL (146 aa)) folds into the Helicase C-terminal domain. Positions 606 to 724 (LTKISKLPAL…SLGGRESSRS (119 aa)) are disordered. Residues 641–650 (GGGASRGRGG) are compositionally biased toward gly residues. Positions 656 to 670 (EDRYRRGGRSLRSDN) are enriched in basic and acidic residues. Low complexity predominate over residues 687–724 (RSSSSFGGRSSSYGSRGSPSPSFGVRSSSLGGRESSRS). A CCHC-type zinc finger spans residues 727–744 (GACFNCGESGHRASDCPN).

This sequence belongs to the DEAD box helicase family. DDX21/DDX50 subfamily.

It localises to the plastid. The protein resides in the chloroplast. It catalyses the reaction ATP + H2O = ADP + phosphate + H(+). In terms of biological role, nuclear genome-encoded factor involved in ribosome biogenesis in chloroplasts. Binds specific group II introns in chloroplasts and facilitates their splicing. Required for normal development of chloroplasts. The polypeptide is DEAD-box ATP-dependent RNA helicase 3A, chloroplastic (Zea mays (Maize)).